We begin with the raw amino-acid sequence, 138 residues long: Basic phospholipase A2 chain HDP-2P (138 aa).

Positions 1–16 (MRILWIVAVCLIGVEG) are cleaved as a signal peptide. 7 cysteine pairs are disulfide-bonded: Cys42/Cys131, Cys44/Cys60, Cys59/Cys111, Cys65/Cys138, Cys66/Cys104, Cys73/Cys97, and Cys91/Cys102. Ca(2+) is bound by residues Tyr43, Gly45, and Gly47. His63 is an active-site residue. Residue Asp64 coordinates Ca(2+). Asp105 is a catalytic residue.

Heterodimer of an acidic and a basic chain; non-covalently linked. The toxic basic protein has phospholipase A2 activity (chain HDP-2P) and the non-toxic acidic protein functions as its inhibitor (chain HPD-1I (AC A4VBF0)). Requires Ca(2+) as cofactor. As to expression, expressed by the venom gland.

It is found in the secreted. It carries out the reaction a 1,2-diacyl-sn-glycero-3-phosphocholine + H2O = a 1-acyl-sn-glycero-3-phosphocholine + a fatty acid + H(+). Its activity is regulated as follows. Enzymatic activity and neurotoxicity are inhibited by Triton X-100. Triton X-100 has been determined to be located in the center of the hydrophobic channel of the enzyme. Functionally, monomer: snake venom phospholipase A2 (PLA2) that affects neuromuscular transmission presynaptically. It has catalytic activity, anticoagulant activity and weakly inhibits ADP-induced platelet aggregation. PLA2 catalyzes the calcium-dependent hydrolysis of the 2-acyl groups in 3-sn-phosphoglycerides. In terms of biological role, heterodimer: shows the same activities as the monomer, but with a lower potency. The chain is Basic phospholipase A2 chain HDP-2P from Vipera nikolskii (Nikolsky's adder).